The chain runs to 255 residues: Small ribosomal subunit protein eS1 (255 aa).

A compositionally biased stretch (basic residues) spans 1–18 (MAVGKNKRLSKGKKGLKK). A disordered region spans residues 1–28 (MAVGKNKRLSKGKKGLKKRTQDPFSRKD). Position 2 is an N-acetylalanine; partial (A2). The span at 19 to 28 (RTQDPFSRKD) shows a compositional bias: basic and acidic residues.

This sequence belongs to the eukaryotic ribosomal protein eS1 family. As to quaternary structure, component of the small ribosomal subunit. Mature ribosomes consist of a small (40S) and a large (60S) subunit. The 40S subunit contains about 33 different proteins and 1 molecule of RNA (18S). The 60S subunit contains about 49 different proteins and 3 molecules of RNA (25S, 5.8S and 5S).

Its subcellular location is the cytoplasm. This Paracoccidioides lutzii (strain ATCC MYA-826 / Pb01) (Paracoccidioides brasiliensis) protein is Small ribosomal subunit protein eS1.